A 207-amino-acid chain; its full sequence is Large ribosomal subunit protein bL9 (207 aa).

A compositionally biased stretch (basic and acidic residues) spans Q162–E176. Positions Q162–Q207 are disordered.

Belongs to the bacterial ribosomal protein bL9 family.

Binds to the 23S rRNA. This chain is Large ribosomal subunit protein bL9, found in Ehrlichia ruminantium (strain Gardel).